We begin with the raw amino-acid sequence, 491 residues long: Proline--tRNA ligase (491 aa).

The protein belongs to the class-II aminoacyl-tRNA synthetase family. ProS type 3 subfamily. Homodimer.

It is found in the cytoplasm. It catalyses the reaction tRNA(Pro) + L-proline + ATP = L-prolyl-tRNA(Pro) + AMP + diphosphate. In terms of biological role, catalyzes the attachment of proline to tRNA(Pro) in a two-step reaction: proline is first activated by ATP to form Pro-AMP and then transferred to the acceptor end of tRNA(Pro). This is Proline--tRNA ligase from Halorubrum lacusprofundi (strain ATCC 49239 / DSM 5036 / JCM 8891 / ACAM 34).